The following is a 296-amino-acid chain: ADP-dependent (S)-NAD(P)H-hydrate dehydratase (296 aa).

Positions 18 to 292 constitute a YjeF C-terminal domain; sequence TALRFPHVFK…PAARWLRNRI (275 aa). Residues Ala-53, Gly-113, and His-165 each contribute to the (6S)-NADPHX site. Residues 202 to 206 and Gly-231 contribute to the AMP site; that span reads KGHKT. A (6S)-NADPHX-binding site is contributed by Asp-232.

It belongs to the NnrD/CARKD family. Homotetramer. It depends on Mg(2+) as a cofactor.

It carries out the reaction (6S)-NADHX + ADP = AMP + phosphate + NADH + H(+). The enzyme catalyses (6S)-NADPHX + ADP = AMP + phosphate + NADPH + H(+). Its function is as follows. Catalyzes the dehydration of the S-form of NAD(P)HX at the expense of ADP, which is converted to AMP. Together with NAD(P)HX epimerase, which catalyzes the epimerization of the S- and R-forms, the enzyme allows the repair of both epimers of NAD(P)HX, a damaged form of NAD(P)H that is a result of enzymatic or heat-dependent hydration. The protein is ADP-dependent (S)-NAD(P)H-hydrate dehydratase of Neisseria meningitidis serogroup B (strain ATCC BAA-335 / MC58).